The following is an 897-amino-acid chain: Probable bifunctional chitinase/lysozyme (897 aa).

The signal sequence occupies residues 1–24 (MKLNIFTKSMIGMGLVCSALPALA). The region spanning 25–91 (MEAWNNQQGG…SQFGNTLSCE (67 aa)) is the Chitin-binding type-3 1 domain. 3 disordered regions span residues 90–127 (CEKS…SNSS), 182–222 (TEIS…PADK), and 287–333 (QYGN…DSVN). Over residues 95–111 (SSSSSNSNTPASNTPAN) the composition is skewed to low complexity. 2 stretches are compositionally biased toward polar residues: residues 113–127 (GSAT…SNSS) and 182–197 (TEIS…TSAP). A Chitin-binding type-3 2 domain is found at 128–194 (VVAWNKQQGG…SETSNPQSCT (67 aa)). The segment covering 198-216 (QPSPDVKPAPDVKPAPDVQ) has biased composition (pro residues). In terms of domain architecture, Chitin-binding type-3 3 spans 229–295 (VVAWKGQEGS…SQYGNPGSCS (67 aa)). Pro residues predominate over residues 309-318 (DPTPETPVTP). The segment covering 322-333 (NSEPSTPADSVN) has biased composition (polar residues). Chitin-binding type-3 domains follow at residues 337–403 (LQAW…TTCE) and 459–529 (AKAW…PQFN). In terms of domain architecture, GH18 spans 586 to 877 (KHVYAPYVDF…TNLSPEFHGL (292 aa)). A disulfide bridge connects residues C628 and C673. The active-site Proton donor is E700.

The protein belongs to the glycosyl hydrolase 18 family. Chitinase class II subfamily.

It localises to the periplasm. It carries out the reaction Random endo-hydrolysis of N-acetyl-beta-D-glucosaminide (1-&gt;4)-beta-linkages in chitin and chitodextrins.. The catalysed reaction is Hydrolysis of (1-&gt;4)-beta-linkages between N-acetylmuramic acid and N-acetyl-D-glucosamine residues in a peptidoglycan and between N-acetyl-D-glucosamine residues in chitodextrins.. Bifunctional enzyme with lysozyme/chitinase activity. This Escherichia coli (strain K12) protein is Probable bifunctional chitinase/lysozyme (chiA).